We begin with the raw amino-acid sequence, 222 residues long: Salivary anticoagulant protein P23 (222 aa).

The N-terminal stretch at Met-1–Ala-17 is a signal peptide. 4 N-linked (GlcNAc...) asparagine glycosylation sites follow: Asn-56, Asn-73, Asn-109, and Asn-114.

Salivary gland (at protein level). Adult midgut.

The protein localises to the secreted. Functionally, inhibits host coagulation by delaying thrombin generation and reducing endogenous thrombin potential (ETP). The protein is Salivary anticoagulant protein P23 of Ixodes scapularis (Black-legged tick).